The primary structure comprises 70 residues: Myotoxin (70 aa).

The signal sequence occupies residues 1 to 22; sequence MKILYLLFAFLFLAFLSEPGNA. 3 cysteine pairs are disulfide-bonded: Cys-26-Cys-58, Cys-33-Cys-52, and Cys-40-Cys-59.

This sequence belongs to the crotamine-myotoxin family. As to quaternary structure, monomer. In terms of tissue distribution, expressed by the venom gland.

It localises to the secreted. Its function is as follows. Cationic peptide that possesses multiple functions. It acts as a cell-penetrating peptide (CPP), and as a potent voltage-gated potassium channel (Kv) inhibitor. It exhibits antimicrobial activities, hind limb paralysis, and severe muscle necrosis by a non-enzymatic mechanism. In Crotalus adamanteus (Eastern diamondback rattlesnake), this protein is Myotoxin.